The chain runs to 276 residues: Omega-amidase NIT2-A (276 aa).

The CN hydrolase domain occupies 4 to 248 (FKLSLVQFLV…ETVLSAEIDL (245 aa)). Glutamate 43 acts as the Proton acceptor in catalysis. Lysine 112 (proton donor) is an active-site residue. The Nucleophile role is filled by cysteine 153.

Belongs to the carbon-nitrogen hydrolase superfamily. NIT1/NIT2 family. Homodimer.

It localises to the cytoplasm. It carries out the reaction 2-oxoglutaramate + H2O = 2-oxoglutarate + NH4(+). It catalyses the reaction 2-oxosuccinamate + H2O = oxaloacetate + NH4(+). Has omega-amidase activity. The role of omega-amidase is to remove potentially toxic intermediates by converting 2-oxoglutaramate and 2-oxosuccinamate to biologically useful 2-oxoglutarate and oxaloacetate, respectively. In Xenopus laevis (African clawed frog), this protein is Omega-amidase NIT2-A (nit2a).